The following is a 619-amino-acid chain: ATP-dependent zinc metalloprotease FtsH (619 aa).

The Cytoplasmic portion of the chain corresponds to 1–11 (MDKQSKFRIKT). The helical transmembrane segment at 12–32 (FFKKIIFFLIIFCFFYFFNFI) threads the bilayer. At 33–131 (KKTKKITHTT…FKNYKIYTVL (99 aa)) the chain is on the periplasmic side. The helical transmembrane segment at 132–152 (NFFYDYGFFLMIIIICWIFIF) threads the bilayer. The Cytoplasmic segment spans residues 153 to 619 (RKIASRSSES…FKEDFASILD (467 aa)). 224-231 (GPPGTGKT) provides a ligand contact to ATP. His-447 is a Zn(2+) binding site. The active site involves Glu-448. Zn(2+) is bound by residues His-451 and Asp-522.

It in the central section; belongs to the AAA ATPase family. The protein in the C-terminal section; belongs to the peptidase M41 family. In terms of assembly, homohexamer. The cofactor is Zn(2+).

It is found in the cell inner membrane. Functionally, acts as a processive, ATP-dependent zinc metallopeptidase for both cytoplasmic and membrane proteins. Plays a role in the quality control of integral membrane proteins. This Karelsulcia muelleri (strain DMIN) (Sulcia muelleri) protein is ATP-dependent zinc metalloprotease FtsH.